Here is a 469-residue protein sequence, read N- to C-terminus: 1-aminocyclopropane-1-carboxylate synthase 3 (469 aa).

Position 272 is an N6-(pyridoxal phosphate)lysine (Lys-272). Residues 432–452 (APNATNHQNQQQSNANSKKKS) form a disordered region. Residues 437–447 (NHQNQQQSNAN) show a composition bias toward low complexity.

The protein belongs to the class-I pyridoxal-phosphate-dependent aminotransferase family. As to quaternary structure, homodimer. Pyridoxal 5'-phosphate serves as cofactor.

It catalyses the reaction S-adenosyl-L-methionine = 1-aminocyclopropane-1-carboxylate + S-methyl-5'-thioadenosine + H(+). Its pathway is alkene biosynthesis; ethylene biosynthesis via S-adenosyl-L-methionine; ethylene from S-adenosyl-L-methionine: step 1/2. Functionally, catalyzes the formation of 1-aminocyclopropane-1-carboxylate, a direct precursor of ethylene in higher plants. The polypeptide is 1-aminocyclopropane-1-carboxylate synthase 3 (ACS3) (Solanum lycopersicum (Tomato)).